Here is a 293-residue protein sequence, read N- to C-terminus: Acetyl-coenzyme A carboxylase carboxyl transferase subunit beta (293 aa).

In terms of domain architecture, CoA carboxyltransferase N-terminal spans 29 to 293 (LWVKCSECSQ…GVKELAEANT (265 aa)). Residues Cys-33, Cys-36, Cys-52, and Cys-55 each contribute to the Zn(2+) site. A C4-type zinc finger spans residues 33-55 (CSECSQVAYRKDLISNFNVCNNC).

The protein belongs to the AccD/PCCB family. As to quaternary structure, acetyl-CoA carboxylase is a heterohexamer composed of biotin carboxyl carrier protein (AccB), biotin carboxylase (AccC) and two subunits each of ACCase subunit alpha (AccA) and ACCase subunit beta (AccD). Zn(2+) is required as a cofactor.

The protein resides in the cytoplasm. It catalyses the reaction N(6)-carboxybiotinyl-L-lysyl-[protein] + acetyl-CoA = N(6)-biotinyl-L-lysyl-[protein] + malonyl-CoA. The protein operates within lipid metabolism; malonyl-CoA biosynthesis; malonyl-CoA from acetyl-CoA: step 1/1. Component of the acetyl coenzyme A carboxylase (ACC) complex. Biotin carboxylase (BC) catalyzes the carboxylation of biotin on its carrier protein (BCCP) and then the CO(2) group is transferred by the transcarboxylase to acetyl-CoA to form malonyl-CoA. This Prochlorococcus marinus (strain AS9601) protein is Acetyl-coenzyme A carboxylase carboxyl transferase subunit beta.